A 129-amino-acid polypeptide reads, in one-letter code: Beta-galactoside-binding lectin (129 aa).

Ser1 carries the post-translational modification N-acetylserine. The Galectin domain maps to 4–129 (GVVDERMSFK…EARIYSIEIK (126 aa)). A beta-D-galactoside is bound at residue 69 to 75 (WGTEQRE).

Its function is as follows. This protein binds beta-galactoside. Its physiological function is not yet known. The sequence is that of Beta-galactoside-binding lectin from Electrophorus electricus (Electric eel).